We begin with the raw amino-acid sequence, 298 residues long: Deleted in azoospermia-like (298 aa).

Residues 1–27 (MSATTSEAPNSAVSREASTQSSSATTS) are disordered. The segment covering 11 to 27 (SAVSREASTQSSSATTS) has biased composition (low complexity). In terms of domain architecture, RRM spans 40–115 (NTVFVGGIDV…KKLKLGPAIR (76 aa)). A homodimerization region spans residues 80–132 (KGYGFVSFYNDVDVQKIVESQINFHGKKLKLGPAIRKQNLCTYHVQPRPLIFN). The 24-residue stretch at 167-190 (AYPPYPSSPVQVITGYQLPVYNYQ) folds into the DAZ domain. Position 276 is a phosphotyrosine (Tyr-276).

The protein belongs to the RRM DAZ family. In terms of assembly, homodimer and heterodimer. Forms a heterodimer with DAZ. Interacts with BOLL, DAZAP1 and DAZAP2. Interacts with PUM2. Multiple DAZL RRMs can bind to a single RNA containing multiple GUU triplets. Expressed predominantly in testis with lower levels in ovary. In testis, it is expressed in pachytene spermatocytes and at lower level in type-B spermatogonia, preleptotene and zygotene spermatocytes. In ovary, it is expressed in maturing follicles. In embryonic and prepuberal ovary, it is expressed in the oocyte and follicular cells.

Its subcellular location is the cytoplasm. In terms of biological role, RNA-binding protein, which is essential for gametogenesis in both males and females. Plays a central role during spermatogenesis. Acts by binding to the 3'-UTR of mRNA, specifically recognizing GUU triplets, and thereby regulating the translation of key transcripts. In Mus musculus (Mouse), this protein is Deleted in azoospermia-like (Dazl).